Reading from the N-terminus, the 74-residue chain is ATP synthase subunit 9, mitochondrial (74 aa).

A run of 2 helical transmembrane segments spans residues 8 to 28 (IGAG…GNVF) and 50 to 70 (ILGF…AFLI).

Belongs to the ATPase C chain family. F-type ATPases have 2 components, CF(1) - the catalytic core - and CF(0) - the membrane proton channel. CF(1) has five subunits: alpha(3), beta(3), gamma(1), delta(1), epsilon(1). CF(0) has three main subunits: a, b and c.

The protein localises to the mitochondrion membrane. This protein is one of the chains of the nonenzymatic membrane component (F0) of mitochondrial ATPase. This is ATP synthase subunit 9, mitochondrial (ATP9) from Brassica napus (Rape).